Consider the following 739-residue polypeptide: Poly(A) polymerase gamma (739 aa).

Lysine 2 is subject to N6-acetyllysine. Serine 23 is subject to Phosphoserine. Residues 99 to 101, threonine 108, 112 to 114, aspartate 166, lysine 227, tyrosine 236, and 245 to 246 contribute to the ATP site; these read FGS, DID, and GV. Mg(2+) contacts are provided by aspartate 112, aspartate 114, and aspartate 166. The interval 506 to 566 is disordered; it reads KSLSDVSRSS…PTGEIERSSA (61 aa). 2 stretches are compositionally biased toward polar residues: residues 509-531 and 538-556; these read SDVS…TCLD and SGTP…NPDS. The residue at position 524 (serine 524) is a Phosphoserine. Phosphoserine occurs at positions 602 and 651. Residue threonine 657 is modified to Phosphothreonine. Basic and acidic residues predominate over residues 677 to 688; sequence SRAAEDRKRKPM. Residues 677–725 are disordered; it reads SRAAEDRKRKPMDSIGGESMPIPTIDTARKKRLPSKELPDSSSPVPANN. Phosphoserine is present on serine 711.

It belongs to the poly(A) polymerase family. Requires Mg(2+) as cofactor. It depends on Mn(2+) as a cofactor.

Its subcellular location is the nucleus. It catalyses the reaction RNA(n) + ATP = RNA(n)-3'-adenine ribonucleotide + diphosphate. Responsible for the post-transcriptional adenylation of the 3'-terminal of mRNA precursors and several small RNAs including signal recognition particle (SRP) RNA, nuclear 7SK RNA, U2 small nuclear RNA, and ribosomal 5S RNA. The protein is Poly(A) polymerase gamma (Papolg) of Mus musculus (Mouse).